The following is a 203-amino-acid chain: Probable cytochrome c oxidase subunit 3 (203 aa).

Helical transmembrane passes span 30–50 (IVWLSSELMFFAGLFAMYFTA), 70–90 (AVPVTLVLIASSFTCQMGVFA), 102–122 (WYVITFLMGLFFVLGQGYEYY), 142–162 (LATGFHDLHVTGGLVAFIFLL), and 179–199 (IVVSYYWHFVDIVWIALFTVI).

The protein belongs to the cytochrome c oxidase subunit 3 family.

The protein resides in the cell membrane. The catalysed reaction is 4 Fe(II)-[cytochrome c] + O2 + 8 H(+)(in) = 4 Fe(III)-[cytochrome c] + 2 H2O + 4 H(+)(out). This is Probable cytochrome c oxidase subunit 3 (ctaE) from Mycolicibacterium paratuberculosis (strain ATCC BAA-968 / K-10) (Mycobacterium paratuberculosis).